The chain runs to 421 residues: Mannose-1-phosphate guanyltransferase alpha-A (421 aa).

It belongs to the transferase hexapeptide repeat family.

The catalysed reaction is alpha-D-mannose 1-phosphate + GTP + H(+) = GDP-alpha-D-mannose + diphosphate. The protein operates within nucleotide-sugar biosynthesis; GDP-alpha-D-mannose biosynthesis; GDP-alpha-D-mannose from alpha-D-mannose 1-phosphate (GTP route): step 1/1. This is Mannose-1-phosphate guanyltransferase alpha-A (gmppa-a) from Xenopus laevis (African clawed frog).